The following is a 216-amino-acid chain: Transmembrane emp24 domain-containing protein eca (216 aa).

The signal sequence occupies residues 1–20 (MRDQFISLALILCVLHSACG). At 21–182 (LYFHISETER…FRHTSESTNS (162 aa)) the chain is on the lumenal side. The GOLD domain maps to 30-126 (RKCFIEEVPD…QLRVHLDIQV (97 aa)). The stretch at 134–164 (AHVAQKEKLTELQLRIRQLLDQVEQITKEQN) forms a coiled coil. A helical transmembrane segment spans residues 183–203 (RVLWWSLAQTVVLVCMGFWQM). The Cytoplasmic portion of the chain corresponds to 204–216 (RHLKSFFEAKKLV). The short motif at 213-216 (KKLV) is the Prevents secretion from ER element.

This sequence belongs to the EMP24/GP25L family.

The protein resides in the endoplasmic reticulum membrane. In terms of biological role, eca and bai are essential, though not redundant, for dorsoventral patterning of the embryo. Specifically required during early embryogenesis for the activity of maternal tkv, while the zygotic tkv is not affected. Involved in Golgi organization. This Drosophila melanogaster (Fruit fly) protein is Transmembrane emp24 domain-containing protein eca.